A 303-amino-acid chain; its full sequence is Glycine--tRNA ligase alpha subunit (303 aa).

This sequence belongs to the class-II aminoacyl-tRNA synthetase family. As to quaternary structure, tetramer of two alpha and two beta subunits.

Its subcellular location is the cytoplasm. The enzyme catalyses tRNA(Gly) + glycine + ATP = glycyl-tRNA(Gly) + AMP + diphosphate. This is Glycine--tRNA ligase alpha subunit from Erwinia tasmaniensis (strain DSM 17950 / CFBP 7177 / CIP 109463 / NCPPB 4357 / Et1/99).